The primary structure comprises 182 residues: Large ribosomal subunit protein uL5 (182 aa).

Belongs to the universal ribosomal protein uL5 family. In terms of assembly, part of the 50S ribosomal subunit; part of the 5S rRNA/L5/L18/L25 subcomplex. Contacts the 5S rRNA and the P site tRNA. Forms a bridge to the 30S subunit in the 70S ribosome.

Functionally, this is one of the proteins that bind and probably mediate the attachment of the 5S RNA into the large ribosomal subunit, where it forms part of the central protuberance. In the 70S ribosome it contacts protein S13 of the 30S subunit (bridge B1b), connecting the 2 subunits; this bridge is implicated in subunit movement. Contacts the P site tRNA; the 5S rRNA and some of its associated proteins might help stabilize positioning of ribosome-bound tRNAs. The sequence is that of Large ribosomal subunit protein uL5 from Coxiella burnetii (strain CbuG_Q212) (Coxiella burnetii (strain Q212)).